The sequence spans 330 residues: FKBP12-interacting protein of 37 kDa (330 aa).

At methionine 1 the chain carries N-acetylmethionine. Positions 1–12 are enriched in acidic residues; it reads MEFSSQDDDFGG. The disordered stretch occupies residues 1–43; the sequence is MEFSSQDDDFGGDDSAANATRASGNRRSFGDLEDDEDDIFGST. Over residues 17–26 the composition is skewed to polar residues; that stretch reads ANATRASGNR. The stretch at 56 to 308 forms a coiled coil; the sequence is SLRGSLKNCK…KGLEIVSELV (253 aa).

The protein belongs to the fl(2)d family. Forms homodimers. Interacts with MTA/EMB1706. Interacts with FKBP12; interaction is inhibited by the immunosuppressive drug FK506. Interacts with VIR. Associates with MTA, MTB, VIR and HAKAI to form the m6A writer complex which is essential for adenosine methylation at specific mRNA sequences. Ubiquitously expressed with higher levels in primary and lateral roots, leaves, trichomes, and in pollen grains (at protein level).

It is found in the nucleus speckle. Its subcellular location is the nucleus. The protein resides in the nucleoplasm. Probable regulatory subunit of the N6-methyltransferase complex, a multiprotein complex that mediates N6-methyladenosine (m6A) methylation at the 5'-[AG]GAC-3' consensus sites of some mRNAs. Associates with MTA, MTB, VIR and HAKAI to form the m6A writer complex which is essential for adenosine methylation at specific mRNA sequences. N6-methyladenosine (m6A) plays a role in mRNA stability, processing, translation efficiency and editing. Essential protein required during endosperm development and embryogenesis. Involved in endoreduplication, especially in trichomes. May play a role in splicing events. The chain is FKBP12-interacting protein of 37 kDa from Arabidopsis thaliana (Mouse-ear cress).